A 1044-amino-acid polypeptide reads, in one-letter code: Isoleucine--tRNA ligase (1044 aa).

Positions 48–58 (PFATGLPHFGH) match the 'HIGH' region motif. Positions 594–598 (KMSKS) match the 'KMSKS' region motif. Lys597 is a binding site for ATP.

The protein belongs to the class-I aminoacyl-tRNA synthetase family. IleS type 2 subfamily. In terms of assembly, monomer. The cofactor is Zn(2+).

It localises to the cytoplasm. It carries out the reaction tRNA(Ile) + L-isoleucine + ATP = L-isoleucyl-tRNA(Ile) + AMP + diphosphate. In terms of biological role, catalyzes the attachment of isoleucine to tRNA(Ile). As IleRS can inadvertently accommodate and process structurally similar amino acids such as valine, to avoid such errors it has two additional distinct tRNA(Ile)-dependent editing activities. One activity is designated as 'pretransfer' editing and involves the hydrolysis of activated Val-AMP. The other activity is designated 'posttransfer' editing and involves deacylation of mischarged Val-tRNA(Ile). This is Isoleucine--tRNA ligase from Borrelia duttonii (strain Ly).